The primary structure comprises 514 residues: Histidine ammonia-lyase (514 aa).

The 5-imidazolinone (Ala-Gly) cross-link spans 146-148 (ASG). Ser147 carries the 2,3-didehydroalanine (Ser) modification.

It belongs to the PAL/histidase family. Post-translationally, contains an active site 4-methylidene-imidazol-5-one (MIO), which is formed autocatalytically by cyclization and dehydration of residues Ala-Ser-Gly.

The protein resides in the cytoplasm. It carries out the reaction L-histidine = trans-urocanate + NH4(+). The protein operates within amino-acid degradation; L-histidine degradation into L-glutamate; N-formimidoyl-L-glutamate from L-histidine: step 1/3. The polypeptide is Histidine ammonia-lyase (Clostridium tetani (strain Massachusetts / E88)).